Reading from the N-terminus, the 467-residue chain is Asparagine--tRNA ligase (467 aa).

It belongs to the class-II aminoacyl-tRNA synthetase family. Homodimer.

The protein localises to the cytoplasm. The catalysed reaction is tRNA(Asn) + L-asparagine + ATP = L-asparaginyl-tRNA(Asn) + AMP + diphosphate + H(+). The chain is Asparagine--tRNA ligase from Histophilus somni (strain 129Pt) (Haemophilus somnus).